The chain runs to 88 residues: Sec-independent protein translocase protein TatA (88 aa).

A helical transmembrane segment spans residues 1–21 (MGSLSPWHWAILAVVVIVLFG). The span at 43–52 (MREMQSETKA) shows a compositional bias: basic and acidic residues. The interval 43-88 (MREMQSETKAEPSAIETNTANPTPVQSQRIDPAAATGQDQTEARPA) is disordered. The segment covering 57 to 71 (IETNTANPTPVQSQR) has biased composition (polar residues).

This sequence belongs to the TatA/E family. As to quaternary structure, the Tat system comprises two distinct complexes: a TatABC complex, containing multiple copies of TatA, TatB and TatC subunits, and a separate TatA complex, containing only TatA subunits. Substrates initially bind to the TatABC complex, which probably triggers association of the separate TatA complex to form the active translocon.

Its subcellular location is the cell membrane. In terms of biological role, part of the twin-arginine translocation (Tat) system that transports large folded proteins containing a characteristic twin-arginine motif in their signal peptide across membranes. TatA could form the protein-conducting channel of the Tat system. The chain is Sec-independent protein translocase protein TatA from Mycobacterium marinum (strain ATCC BAA-535 / M).